The chain runs to 193 residues: Potassium-transporting ATPase KdpC subunit (193 aa).

A helical membrane pass occupies residues 14 to 34 (ITFTFLVLCGLVYPLIVTGIA).

This sequence belongs to the KdpC family. As to quaternary structure, the system is composed of three essential subunits: KdpA, KdpB and KdpC.

The protein localises to the cell membrane. In terms of biological role, part of the high-affinity ATP-driven potassium transport (or Kdp) system, which catalyzes the hydrolysis of ATP coupled with the electrogenic transport of potassium into the cytoplasm. This subunit acts as a catalytic chaperone that increases the ATP-binding affinity of the ATP-hydrolyzing subunit KdpB by the formation of a transient KdpB/KdpC/ATP ternary complex. The chain is Potassium-transporting ATPase KdpC subunit from Bacillus cereus (strain G9842).